The sequence spans 441 residues: Keratin, type I cytoskeletal 15 (441 aa).

Residues 2 to 91 (LLLGHASTST…GGSDLLLGTS (90 aa)) are head. The segment at 92 to 127 (GKEAMQNLNDRLASYLDKVRSLEGKNHELELKIKDW) is coil 1A. Residues 92–407 (GKEAMQNLND…MLLDSEDSKG (316 aa)) enclose the IF rod domain. The linker 1 stretch occupies residues 128–149 (YSQVIPGTGGPDARDYGHLEKE). The interval 150–241 (IEDLQNKVNN…KNHEEDMKAA (92 aa)) is coil 1B. A linker 12 region spans residues 242–261 (SSGIAGQVNVELDAAPGTNL). Positions 262 to 403 (LDELDACRRD…ATYRMLLDSE (142 aa)) are coil 2. Residues 404–441 (DSKGSIINHKILTAIEKLVDGIVLSTEVLEKQIPVLSY) are tail.

Belongs to the intermediate filament family. In terms of assembly, heterotetramer of two type I and two type II keratins. As to expression, expressed in skin.

The chain is Keratin, type I cytoskeletal 15 (KRT15) from Protopterus aethiopicus (Marbled lungfish).